A 696-amino-acid polypeptide reads, in one-letter code: Glycine--tRNA ligase beta subunit (696 aa).

It belongs to the class-II aminoacyl-tRNA synthetase family. As to quaternary structure, tetramer of two alpha and two beta subunits.

The protein localises to the cytoplasm. It catalyses the reaction tRNA(Gly) + glycine + ATP = glycyl-tRNA(Gly) + AMP + diphosphate. The protein is Glycine--tRNA ligase beta subunit of Nitratidesulfovibrio vulgaris (strain DP4) (Desulfovibrio vulgaris).